A 349-amino-acid chain; its full sequence is 4-hydroxythreonine-4-phosphate dehydrogenase (349 aa).

2 residues coordinate substrate: His141 and Thr142. Residues His176, His221, and His276 each contribute to the a divalent metal cation site. Positions 284, 293, and 302 each coordinate substrate.

The protein belongs to the PdxA family. In terms of assembly, homodimer. Zn(2+) serves as cofactor. Mg(2+) is required as a cofactor. The cofactor is Co(2+).

It is found in the cytoplasm. The catalysed reaction is 4-(phosphooxy)-L-threonine + NAD(+) = 3-amino-2-oxopropyl phosphate + CO2 + NADH. It functions in the pathway cofactor biosynthesis; pyridoxine 5'-phosphate biosynthesis; pyridoxine 5'-phosphate from D-erythrose 4-phosphate: step 4/5. Its function is as follows. Catalyzes the NAD(P)-dependent oxidation of 4-(phosphooxy)-L-threonine (HTP) into 2-amino-3-oxo-4-(phosphooxy)butyric acid which spontaneously decarboxylates to form 3-amino-2-oxopropyl phosphate (AHAP). The polypeptide is 4-hydroxythreonine-4-phosphate dehydrogenase (Methylorubrum extorquens (strain CM4 / NCIMB 13688) (Methylobacterium extorquens)).